We begin with the raw amino-acid sequence, 169 residues long: MSDNKHRVTRRQFLNYTLTGVGGFMAAGMLMPMLRFAFDPILRETAGTDMVAVADVKEITTEPKRFDFKVKVKDAWYESEEPRSAWVYKDEKGDIIALSPVCKHLGCTVDWNTDKNNPNHFFCPCHYGLYTKDGTNVPGTPPTAPLDRYEFEVKDGKLYLGKAKPRGEA.

The 99-residue stretch at 62 to 160 (EPKRFDFKVK…FEVKDGKLYL (99 aa)) folds into the Rieske domain. [2Fe-2S] cluster contacts are provided by C102, H104, C123, and H126. C107 and C125 form a disulfide bridge.

Belongs to the Rieske iron-sulfur protein family. As to quaternary structure, the main subunits of the menaquinol:cytochrome c complex are a Rieske-type iron-sulfur protein (QcrA), a cytochrome b (QcrB) and a cytochrome c (QcrC). [2Fe-2S] cluster serves as cofactor.

Component of the menaquinol:cytochrome c reductase complex. The Rieske protein is a high potential 2Fe-2S protein. The polypeptide is Menaquinol:cytochrome c reductase iron-sulfur subunit (qcrA) (Geobacillus thermodenitrificans).